We begin with the raw amino-acid sequence, 443 residues long: tRNA (guanine-N(7)-)-methyltransferase non-catalytic subunit TRM82 (443 aa).

The disordered stretch occupies residues 67 to 93 (ASKKLKTNDGEPVAQPKKQAKVPKPGP). WD repeat units lie at residues 97-137 (PVYQ…KDNI), 193-235 (GHVS…IVDK), and 239-279 (GHEE…LLFK).

It belongs to the WD repeat TRM82 family. In terms of assembly, forms a heterodimer with the catalytic subunit TRM8.

It localises to the nucleus. It functions in the pathway tRNA modification; N(7)-methylguanine-tRNA biosynthesis. Functionally, required for the formation of N(7)-methylguanine at position 46 (m7G46) in tRNA. In the complex, it is required to stabilize and induce conformational changes of the catalytic subunit. The sequence is that of tRNA (guanine-N(7)-)-methyltransferase non-catalytic subunit TRM82 from Kluyveromyces lactis (strain ATCC 8585 / CBS 2359 / DSM 70799 / NBRC 1267 / NRRL Y-1140 / WM37) (Yeast).